The following is a 209-amino-acid chain: Potassium-transporting ATPase KdpC subunit (209 aa).

The chain crosses the membrane as a helical span at residues 10-30 (VISLVFLFVLGFLFPTVTSLI).

This sequence belongs to the KdpC family. The system is composed of three essential subunits: KdpA, KdpB and KdpC.

It is found in the cell membrane. Part of the high-affinity ATP-driven potassium transport (or Kdp) system, which catalyzes the hydrolysis of ATP coupled with the electrogenic transport of potassium into the cytoplasm. This subunit acts as a catalytic chaperone that increases the ATP-binding affinity of the ATP-hydrolyzing subunit KdpB by the formation of a transient KdpB/KdpC/ATP ternary complex. The protein is Potassium-transporting ATPase KdpC subunit of Thermoplasma volcanium (strain ATCC 51530 / DSM 4299 / JCM 9571 / NBRC 15438 / GSS1).